The sequence spans 726 residues: Probable pre-mRNA-splicing factor ATP-dependent RNA helicase DEAH2 (726 aa).

The Helicase ATP-binding domain maps to 71-240; it reads LKTLNNNQTL…FSGAPLMKVP (170 aa). Residue 84-91 coordinates ATP; that stretch reads GETGSGKT. A DEAH box motif is present at residues 187–190; it reads DEAH. Positions 265-445 constitute a Helicase C-terminal domain; sequence TVVQIHMCEP…NTVLTLKKLG (181 aa).

It belongs to the DEAD box helicase family. DEAH subfamily. PRP43 sub-subfamily.

The enzyme catalyses ATP + H2O = ADP + phosphate + H(+). In terms of biological role, may be involved in pre-mRNA splicing. The polypeptide is Probable pre-mRNA-splicing factor ATP-dependent RNA helicase DEAH2 (Arabidopsis thaliana (Mouse-ear cress)).